A 604-amino-acid chain; its full sequence is Uptake hydrogenase large subunit (604 aa).

Ni(2+)-binding residues include cysteine 76, cysteine 79, cysteine 583, and cysteine 586.

The protein belongs to the [NiFe]/[NiFeSe] hydrogenase large subunit family. Heterodimer of a large and a small subunit. Ni(2+) serves as cofactor.

It localises to the cell membrane. It carries out the reaction H2 + A = AH2. Functionally, this enzyme recycles the H(2) produced by nitrogenase to increase the production of ATP and to protect nitrogenase against inhibition or damage by O(2) under carbon- or phosphate-limited conditions. The protein is Uptake hydrogenase large subunit (hoxL) of Afipia carboxidovorans (strain ATCC 49405 / DSM 1227 / KCTC 32145 / OM5) (Oligotropha carboxidovorans).